An 86-amino-acid chain; its full sequence is Small ribosomal subunit protein bS18 (86 aa).

Residues 1–20 are disordered; that stretch reads MSREEGNNGRRPGGKMRRSR.

The protein belongs to the bacterial ribosomal protein bS18 family. Part of the 30S ribosomal subunit. Forms a tight heterodimer with protein bS6.

Its function is as follows. Binds as a heterodimer with protein bS6 to the central domain of the 16S rRNA, where it helps stabilize the platform of the 30S subunit. The chain is Small ribosomal subunit protein bS18 from Clostridium beijerinckii (strain ATCC 51743 / NCIMB 8052) (Clostridium acetobutylicum).